A 1004-amino-acid polypeptide reads, in one-letter code: Ephrin type-B receptor 2 (1004 aa).

The N-terminal stretch at 1-19 (MGPLWFCCLPLALLPLLAA) is a signal peptide. Topologically, residues 20–544 (VEETLMDSTT…QTSVQEKLPL (525 aa)) are extracellular. Residues 21-203 (EETLMDSTTA…FYRKCPRVIQ (183 aa)) enclose the Eph LBD domain. 2 disulfide bridges follow: cysteine 63–cysteine 185 and cysteine 98–cysteine 108. 5 N-linked (GlcNAc...) asparagine glycosylation sites follow: asparagine 266, asparagine 337, asparagine 429, asparagine 478, and asparagine 483. Fibronectin type-III domains are found at residues 325–435 (IPSA…TNQA) and 436–531 (APSA…TMTE). Residues 545–565 (IIGSSAAGLVFLIAVVVIIIV) form a helical membrane-spanning segment. The Cytoplasmic segment spans residues 566-1004 (CNRRRGFERA…QMNQIQSVEV (439 aa)). The 264-residue stretch at 639 to 902 (VKIEQVIGAG…QIVNTLDKMI (264 aa)) folds into the Protein kinase domain. ATP-binding positions include 645–653 (IGAGEFGEV) and lysine 671. The Proton acceptor role is filled by aspartate 764. Positions 931-995 (TSFNTVDEWL…LNSIQVMRAQ (65 aa)) constitute an SAM domain. The PDZ-binding signature appears at 1002 to 1004 (VEV).

The protein belongs to the protein kinase superfamily. Tyr protein kinase family. Ephrin receptor subfamily. As to quaternary structure, heterotetramer upon binding of the ligand. The heterotetramer is composed of an ephrin dimer and a receptor dimer. Oligomerization is probably required to induce biological responses. Post-translationally, ligand binding induces cleavage by matrix metalloproteinases (MMPs) such as MMP7/MMP9, producing an EphB2/N-terminal fragment (NTF) and a C-terminal long fragment (EphB2-LF). EphB2-LF is further cleaved by MMPs, producing EphB2/CTF1 which is further cleaved by the PS1/gamma-secretase producing EphB2/CTF2. Wide tissue distribution throughout development and sustained expression in adult brain. The longer form (CEK5+) is specifically expressed in the central nervous system.

The protein resides in the cell membrane. It localises to the cell projection. The protein localises to the axon. Its subcellular location is the dendrite. The enzyme catalyses L-tyrosyl-[protein] + ATP = O-phospho-L-tyrosyl-[protein] + ADP + H(+). Functionally, receptor tyrosine kinase which binds promiscuously transmembrane ephrin-B family ligands residing on adjacent cells, leading to contact-dependent bidirectional signaling into neighboring cells. The signaling pathway downstream of the receptor is referred to as forward signaling while the signaling pathway downstream of the ephrin ligand is referred to as reverse signaling. Functions in axon guidance during development. In addition to axon guidance, also regulates dendritic spines development and maturation and stimulates the formation of excitatory synapses. This Gallus gallus (Chicken) protein is Ephrin type-B receptor 2 (EPHB2).